The chain runs to 294 residues: Nucleotide-binding protein CLJ_B3680 (294 aa).

Position 8–15 (8–15) interacts with ATP; the sequence is GLSGAGKT. 59–62 serves as a coordination point for GTP; it reads DIRG.

It belongs to the RapZ-like family.

Its function is as follows. Displays ATPase and GTPase activities. In Clostridium botulinum (strain 657 / Type Ba4), this protein is Nucleotide-binding protein CLJ_B3680.